The sequence spans 156 residues: Ribosomal RNA large subunit methyltransferase H (156 aa).

Residues Leu73, Gly104, and 123–128 (LSALTL) contribute to the S-adenosyl-L-methionine site.

The protein belongs to the RNA methyltransferase RlmH family. Homodimer.

The protein resides in the cytoplasm. The catalysed reaction is pseudouridine(1915) in 23S rRNA + S-adenosyl-L-methionine = N(3)-methylpseudouridine(1915) in 23S rRNA + S-adenosyl-L-homocysteine + H(+). Functionally, specifically methylates the pseudouridine at position 1915 (m3Psi1915) in 23S rRNA. In Psychromonas ingrahamii (strain DSM 17664 / CCUG 51855 / 37), this protein is Ribosomal RNA large subunit methyltransferase H.